Consider the following 472-residue polypeptide: Interferon-induced protein with tetratricopeptide repeats 2 (472 aa).

At Ser2 the chain carries N-acetylserine. TPR repeat units lie at residues 51 to 89 (ATMC…PDQV), 90 to 135 (EIRS…RIEN), 136 to 171 (PALD…DPKN), 172 to 208 (PEFT…SPDN), 244 to 277 (IDTL…LPNN), 278 to 333 (AYVH…MLEY), 334 to 364 (SCSF…KDLP), 365 to 403 (PGPK…KKKT), and 404 to 445 (IPQK…GGQQ). The segment at 441-472 (GGGQQADKDSERGVDSANQVPSASLDEDGAEY) is disordered.

Belongs to the IFIT family. Domain-swapped homodimer. Component of an interferon-dependent multiprotein complex, at least composed of IFIT1, IFIT2 and IFIT3. Interacts with IFIT1 and IFIT3. Interacts with STING1/MITA and disrupts its interaction with MAVS or TBK1. Interacts with EIF3C.

It localises to the cytoplasm. The protein localises to the endoplasmic reticulum. In terms of biological role, IFN-induced antiviral protein which inhibits expression of viral messenger RNAs lacking 2'-O-methylation of the 5' cap. The ribose 2'-O-methylation would provide a molecular signature to distinguish between self and non-self mRNAs by the host during viral infection. Viruses evolved several ways to evade this restriction system such as encoding their own 2'-O-methylase for their mRNAs or by stealing host cap containing the 2'-O-methylation (cap snatching mechanism). Binds AU-rich viral RNAs, with or without 5' triphosphorylation, RNA-binding is required for antiviral activity. Can promote apoptosis. The sequence is that of Interferon-induced protein with tetratricopeptide repeats 2 (Ifit2) from Mus musculus (Mouse).